A 553-amino-acid polypeptide reads, in one-letter code: Urocanate hydratase (553 aa).

Residues 45 to 46 (GG), Q123, 169 to 171 (GMG), D189, R194, 235 to 236 (NA), 256 to 260 (QTSAH), 266 to 267 (YV), Y315, and G485 contribute to the NAD(+) site.

The protein belongs to the urocanase family. It depends on NAD(+) as a cofactor.

Its subcellular location is the cytoplasm. The enzyme catalyses 4-imidazolone-5-propanoate = trans-urocanate + H2O. It functions in the pathway amino-acid degradation; L-histidine degradation into L-glutamate; N-formimidoyl-L-glutamate from L-histidine: step 2/3. In terms of biological role, catalyzes the conversion of urocanate to 4-imidazolone-5-propionate. The sequence is that of Urocanate hydratase from Staphylococcus saprophyticus subsp. saprophyticus (strain ATCC 15305 / DSM 20229 / NCIMB 8711 / NCTC 7292 / S-41).